Reading from the N-terminus, the 1217-residue chain is DNA-directed RNA polymerase subunit beta' (1217 aa).

Residues Cys60, Cys62, Cys75, and Cys78 each contribute to the Zn(2+) site. Residues Asp449, Asp451, and Asp453 each coordinate Mg(2+). Residues Cys821, Cys895, Cys902, and Cys905 each contribute to the Zn(2+) site.

Belongs to the RNA polymerase beta' chain family. As to quaternary structure, the RNAP catalytic core consists of 2 alpha, 1 beta, 1 beta' and 1 omega subunit. When a sigma factor is associated with the core the holoenzyme is formed, which can initiate transcription. The cofactor is Mg(2+). Zn(2+) is required as a cofactor.

It carries out the reaction RNA(n) + a ribonucleoside 5'-triphosphate = RNA(n+1) + diphosphate. In terms of biological role, DNA-dependent RNA polymerase catalyzes the transcription of DNA into RNA using the four ribonucleoside triphosphates as substrates. This is DNA-directed RNA polymerase subunit beta' from Lactobacillus acidophilus (strain ATCC 700396 / NCK56 / N2 / NCFM).